The following is a 32-amino-acid chain: Mu-theraphotoxin-Se1a (32 aa).

3 cysteine pairs are disulfide-bonded: cysteine 2–cysteine 17, cysteine 9–cysteine 22, and cysteine 16–cysteine 28.

It belongs to the neurotoxin 10 (Hwtx-1) family. In terms of tissue distribution, expressed by the venom gland.

Its subcellular location is the secreted. Voltage-gated sodium channel Nav1.7/SCN9A inhibitor. The protein is Mu-theraphotoxin-Se1a of Selenocosmia effera (Tarantula spider).